Reading from the N-terminus, the 137-residue chain is Large ribosomal subunit protein uL22 (137 aa).

It belongs to the universal ribosomal protein uL22 family. As to quaternary structure, part of the 50S ribosomal subunit.

Functionally, this protein binds specifically to 23S rRNA; its binding is stimulated by other ribosomal proteins, e.g. L4, L17, and L20. It is important during the early stages of 50S assembly. It makes multiple contacts with different domains of the 23S rRNA in the assembled 50S subunit and ribosome. The globular domain of the protein is located near the polypeptide exit tunnel on the outside of the subunit, while an extended beta-hairpin is found that lines the wall of the exit tunnel in the center of the 70S ribosome. This is Large ribosomal subunit protein uL22 from Flavobacterium psychrophilum (strain ATCC 49511 / DSM 21280 / CIP 103535 / JIP02/86).